Consider the following 187-residue polypeptide: dCTP deaminase, dUMP-forming (187 aa).

DCTP contacts are provided by residues 101–106 (KSSLGR), Asp119, 127–129 (TLE), Gln148, Tyr162, Lys170, and Gln174. The Proton donor/acceptor role is filled by Glu129.

Belongs to the dCTP deaminase family. Homotrimer.

It carries out the reaction dCTP + 2 H2O = dUMP + NH4(+) + diphosphate. It functions in the pathway pyrimidine metabolism; dUMP biosynthesis; dUMP from dCTP: step 1/1. Functionally, bifunctional enzyme that catalyzes both the deamination of dCTP to dUTP and the hydrolysis of dUTP to dUMP without releasing the toxic dUTP intermediate. In Corynebacterium diphtheriae (strain ATCC 700971 / NCTC 13129 / Biotype gravis), this protein is dCTP deaminase, dUMP-forming.